The primary structure comprises 413 residues: Multifunctional CCA protein (413 aa).

ATP-binding residues include Gly8 and Arg11. 2 residues coordinate CTP: Gly8 and Arg11. 2 residues coordinate Mg(2+): Asp21 and Asp23. The ATP site is built by Arg91, Arg143, and Arg146. Positions 91, 143, and 146 each coordinate CTP. In terms of domain architecture, HD spans 232 to 333 (TGVHVMMVVD…VRLFERSDAL (102 aa)).

This sequence belongs to the tRNA nucleotidyltransferase/poly(A) polymerase family. Bacterial CCA-adding enzyme type 1 subfamily. Monomer. Can also form homodimers and oligomers. The cofactor is Mg(2+). Requires Ni(2+) as cofactor.

It carries out the reaction a tRNA precursor + 2 CTP + ATP = a tRNA with a 3' CCA end + 3 diphosphate. The catalysed reaction is a tRNA with a 3' CCA end + 2 CTP + ATP = a tRNA with a 3' CCACCA end + 3 diphosphate. Catalyzes the addition and repair of the essential 3'-terminal CCA sequence in tRNAs without using a nucleic acid template. Adds these three nucleotides in the order of C, C, and A to the tRNA nucleotide-73, using CTP and ATP as substrates and producing inorganic pyrophosphate. tRNA 3'-terminal CCA addition is required both for tRNA processing and repair. Also involved in tRNA surveillance by mediating tandem CCA addition to generate a CCACCA at the 3' terminus of unstable tRNAs. While stable tRNAs receive only 3'-terminal CCA, unstable tRNAs are marked with CCACCA and rapidly degraded. This is Multifunctional CCA protein from Burkholderia orbicola (strain MC0-3).